A 223-amino-acid polypeptide reads, in one-letter code: ATP synthase subunit a 1 (223 aa).

The next 5 helical transmembrane spans lie at 20-40, 78-98, 108-128, 174-194, and 196-216; these read LTIATTWALMLVLVGGSAFAS, YLPYLGTLFIFIAFSNLCTII, LSTTAALAMSVFVAVPLFGIA, MILAILLTVTPFVFPVLMSVL, and LLTGMVQAYIFSILATVYISA.

It belongs to the ATPase A chain family. In terms of assembly, F-type ATPases have 2 components, CF(1) - the catalytic core - and CF(0) - the membrane proton channel. CF(1) has five subunits: alpha(3), beta(3), gamma(1), delta(1), epsilon(1). CF(0) has four main subunits: a, b, b' and c.

The protein localises to the cell inner membrane. Functionally, key component of the proton channel; it plays a direct role in the translocation of protons across the membrane. This chain is ATP synthase subunit a 1, found in Chlorobium luteolum (strain DSM 273 / BCRC 81028 / 2530) (Pelodictyon luteolum).